The following is a 409-amino-acid chain: Argininosuccinate synthase (409 aa).

ATP-binding positions include 11 to 19 (AYSGGLDTS) and A38. L-citrulline-binding residues include Y91 and S96. Residue G121 coordinates ATP. L-aspartate contacts are provided by T123, N127, and D128. Residue N127 coordinates L-citrulline. L-citrulline contacts are provided by R131, S182, S191, E267, and Y279.

This sequence belongs to the argininosuccinate synthase family. Type 1 subfamily. In terms of assembly, homotetramer.

Its subcellular location is the cytoplasm. The catalysed reaction is L-citrulline + L-aspartate + ATP = 2-(N(omega)-L-arginino)succinate + AMP + diphosphate + H(+). It functions in the pathway amino-acid biosynthesis; L-arginine biosynthesis; L-arginine from L-ornithine and carbamoyl phosphate: step 2/3. This is Argininosuccinate synthase from Nitrobacter hamburgensis (strain DSM 10229 / NCIMB 13809 / X14).